Here is a 515-residue protein sequence, read N- to C-terminus: 1-pyrroline-5-carboxylate dehydrogenase (515 aa).

Active-site residues include E286 and C320.

It belongs to the aldehyde dehydrogenase family. RocA subfamily.

The catalysed reaction is L-glutamate 5-semialdehyde + NAD(+) + H2O = L-glutamate + NADH + 2 H(+). It participates in amino-acid degradation; L-proline degradation into L-glutamate; L-glutamate from L-proline: step 2/2. This is 1-pyrroline-5-carboxylate dehydrogenase from Bacillus pumilus (strain SAFR-032).